Consider the following 391-residue polypeptide: Phosphoglycerate kinase (391 aa).

Substrate-binding positions include 21 to 23 (DLN), Arg-36, 59 to 62 (HLGR), Arg-113, and Arg-146. ATP-binding positions include Lys-197, Glu-319, and 345–348 (GGDT).

This sequence belongs to the phosphoglycerate kinase family. In terms of assembly, monomer.

The protein localises to the cytoplasm. The enzyme catalyses (2R)-3-phosphoglycerate + ATP = (2R)-3-phospho-glyceroyl phosphate + ADP. The protein operates within carbohydrate degradation; glycolysis; pyruvate from D-glyceraldehyde 3-phosphate: step 2/5. The polypeptide is Phosphoglycerate kinase (Shewanella sp. (strain ANA-3)).